The following is a 500-amino-acid chain: Probable malate:quinone oxidoreductase (500 aa).

This sequence belongs to the MQO family. FAD is required as a cofactor.

It carries out the reaction (S)-malate + a quinone = a quinol + oxaloacetate. Its pathway is carbohydrate metabolism; tricarboxylic acid cycle; oxaloacetate from (S)-malate (quinone route): step 1/1. The sequence is that of Probable malate:quinone oxidoreductase from Bacillus cereus (strain G9842).